The primary structure comprises 461 residues: Calcitonin gene-related peptide type 1 receptor (461 aa).

Positions 1-22 are cleaved as a signal peptide; sequence MEKKCTLYFLVLLPFFMILVTA. The Extracellular segment spans residues 23–139; it reads ELEESPEDSI…NTHEKVKTAL (117 aa). 3 disulfides stabilise this stretch: Cys-48–Cys-74, Cys-65–Cys-105, and Cys-88–Cys-127. Residues Asn-66, Asn-118, and Asn-123 are each glycosylated (N-linked (GlcNAc...) asparagine). The helical transmembrane segment at 140 to 164 threads the bilayer; that stretch reads NLFYLTIIGHGLSIASLLISLGIFF. Topologically, residues 165 to 175 are cytoplasmic; that stretch reads YFKSLSCQRIT. Residues 176–198 traverse the membrane as a helical segment; that stretch reads LHKNLFFSFVCNSVVTIIHLTAV. Over 199–209 the chain is Extracellular; the sequence is ANNQALVATNP. The helical transmembrane segment at 210–238 threads the bilayer; that stretch reads VSCKVSQFIHLYLMGCNYFWMLCEGIYLH. Topologically, residues 239 to 252 are cytoplasmic; the sequence is TLIVVAVFAEKQHL. A helical transmembrane segment spans residues 253–273; that stretch reads MWYYFLGWGFPLIPACIHAIA. Residues 274-289 lie on the Extracellular side of the membrane; that stretch reads RSLYYNDNCWISSDTH. Residues 288 to 289 are required for RAMP3 interaction; sequence TH. A helical transmembrane segment spans residues 290–314; it reads LLYIIHGPICAALLVNLFFLLNIVR. Over 315–329 the chain is Cytoplasmic; the sequence is VLITKLKVTHQAESN. The chain crosses the membrane as a helical span at residues 330–351; the sequence is LYMKAVRATLILVPLLGIEFVL. The Extracellular segment spans residues 352 to 366; that stretch reads IPWRPEGKIAEEVYD. The chain crosses the membrane as a helical span at residues 367–387; the sequence is YIMHILMHFQGLLVSTIFCFF. Ser-420 and Ser-445 each carry phosphoserine.

This sequence belongs to the G-protein coupled receptor 2 family. In terms of assembly, heterodimer of CALCRL and RAMP1; the receptor complex functions as CGRP receptor. Heterodimer of CALCRL and RAMP2 or CALCRL and RAMP3; the complexes function as adrenomedullin receptor. As to expression, predominantly expressed in the lung and heart.

It localises to the cell membrane. Functionally, g protein-coupled receptor which specificity is determined by its interaction with receptor-activity-modifying proteins (RAMPs). Together with RAMP1, form the receptor complex for calcitonin-gene-related peptides CALCA/CGRP1 and CALCB/CGRP2. Together with RAMP2 or RAMP3, function as receptor complexes for adrenomedullin (ADM and ADM2). Ligand binding causes a conformation change that triggers signaling via guanine nucleotide-binding proteins (G proteins) and modulates the activity of downstream effectors. Activates cAMP-dependent pathway. This chain is Calcitonin gene-related peptide type 1 receptor, found in Homo sapiens (Human).